Reading from the N-terminus, the 411-residue chain is 2,3-bisphosphoglycerate-independent phosphoglycerate mutase (411 aa).

Belongs to the BPG-independent phosphoglycerate mutase family. A-PGAM subfamily.

The enzyme catalyses (2R)-2-phosphoglycerate = (2R)-3-phosphoglycerate. It participates in carbohydrate degradation; glycolysis; pyruvate from D-glyceraldehyde 3-phosphate: step 3/5. In terms of biological role, catalyzes the interconversion of 2-phosphoglycerate and 3-phosphoglycerate. The protein is 2,3-bisphosphoglycerate-independent phosphoglycerate mutase of Pyrobaculum aerophilum (strain ATCC 51768 / DSM 7523 / JCM 9630 / CIP 104966 / NBRC 100827 / IM2).